Consider the following 728-residue polypeptide: 1,4-alpha-glucan branching enzyme GlgB (728 aa).

Catalysis depends on Asp405, which acts as the Nucleophile. Glu458 acts as the Proton donor in catalysis.

This sequence belongs to the glycosyl hydrolase 13 family. GlgB subfamily. Monomer.

The enzyme catalyses Transfers a segment of a (1-&gt;4)-alpha-D-glucan chain to a primary hydroxy group in a similar glucan chain.. The protein operates within glycan biosynthesis; glycogen biosynthesis. In terms of biological role, catalyzes the formation of the alpha-1,6-glucosidic linkages in glycogen by scission of a 1,4-alpha-linked oligosaccharide from growing alpha-1,4-glucan chains and the subsequent attachment of the oligosaccharide to the alpha-1,6 position. This chain is 1,4-alpha-glucan branching enzyme GlgB, found in Salmonella typhi.